We begin with the raw amino-acid sequence, 421 residues long: Histidine--tRNA ligase (421 aa).

The protein belongs to the class-II aminoacyl-tRNA synthetase family. Homodimer.

The protein localises to the cytoplasm. The enzyme catalyses tRNA(His) + L-histidine + ATP = L-histidyl-tRNA(His) + AMP + diphosphate + H(+). This Francisella tularensis subsp. holarctica (strain OSU18) protein is Histidine--tRNA ligase.